The following is a 260-amino-acid chain: Flagellar basal-body rod protein FlgG (260 aa).

It belongs to the flagella basal body rod proteins family. As to quaternary structure, the basal body constitutes a major portion of the flagellar organelle and consists of four rings (L,P,S, and M) mounted on a central rod. The rod consists of about 26 subunits of FlgG in the distal portion, and FlgB, FlgC and FlgF are thought to build up the proximal portion of the rod with about 6 subunits each.

It localises to the bacterial flagellum basal body. The sequence is that of Flagellar basal-body rod protein FlgG (flgG) from Salmonella typhi.